We begin with the raw amino-acid sequence, 355 residues long: Inositol polyphosphate multikinase (355 aa).

An N-acetylmethionine modification is found at methionine 1. An ATP-binding site is contributed by lysine 31. Phosphoserine is present on serine 97. ATP-binding positions include 118–120 (ENL) and aspartate 131. Substrate is bound at residue 127–135 (PNILDIKLG). Residues glutamate 271 and asparagine 274 each contribute to the Ca(2+) site. Residues 284-304 (FIDDDDDDDDNDDDDDDDAEG) are compositionally biased toward acidic residues. The tract at residues 284-317 (FIDDDDDDDDNDDDDDDDAEGSSEGPKDKKTTGS) is disordered. Residue aspartate 325 coordinates ATP. Glycine 334 contacts Ca(2+).

The protein belongs to the inositol phosphokinase (IPK) family. In terms of assembly, interacts with ARG80 and MCM1. The cofactor is Ca(2+).

It localises to the nucleus. The catalysed reaction is 1D-myo-inositol 1,4,5-trisphosphate + 2 ATP = 1D-myo-inositol 1,3,4,5,6-pentakisphosphate + 2 ADP + 2 H(+). It catalyses the reaction 1D-myo-inositol 1,4,5-trisphosphate + ATP = 1D-myo-inositol 1,4,5,6-tetrakisphosphate + ADP + H(+). It carries out the reaction 1D-myo-inositol 1,4,5-trisphosphate + ATP = 1D-myo-inositol 1,3,4,5-tetrakisphosphate + ADP + H(+). The enzyme catalyses 1D-myo-inositol 1,4,5,6-tetrakisphosphate + ATP = 1D-myo-inositol 1,3,4,5,6-pentakisphosphate + ADP + H(+). The catalysed reaction is a 1,2-diacyl-sn-glycero-3-phospho-(1D-myo-inositol-4,5-bisphosphate) + ATP = a 1,2-diacyl-sn-glycero-3-phospho-(1D-myo-inositol-3,4,5-trisphosphate) + ADP + H(+). Inositol phosphate kinase with both monophosphoinositol and diphosphoinositol polyphosphate synthase activities. Able to phosphorylate inositol 1,4,5-trisphosphate (Ins(1,4,5)P3) on both the carbon-3 and carbon-6 positions to synthesize inositol 1,3,4,5-tetrakisphosphate (Ins(1,3,4,5)P4) and inositol 1,4,5,6-tetrakisphosphate (Ins(1,4,5,6)P4), and then to subsequently phosphorylate and convert either isomer of InsP4 to inositol 1,3,4,5,6-pentakisphosphate (Ins(1,3,4,5,6)P5). Its predominant in vivo catalytic function is to convert Ins(1,4,5)P3 to Ins(1,4,5,6)P4 to Ins(1,3,4,5,6)P5 via 6- and 3-kinase activities. It can also use Ins(1,3,4,5,6)P5 as a substrate and act as a diphosphoinositol polyphosphate synthase to generate two different isomers of PP-InsP4. Also has a role in transcription regulation. Forms a complex with ARG80, ARG81 and MCM1 (ArgR-MCM1), which coordinates the expression of arginine anabolic and catabolic genes in response to arginine. Recruits ARG80 and MCM21 to stabilize them. Neither the kinase activity nor inositol phosphates are required for the formation of ArgR-MCM1 transcriptional complexes on DNA promoter elements and the control of arginine metabolism. In contrast, only the catalytic activity is required for PHO gene repression by phosphate and for NCR gene activation in response to nitrogen availability, indicating a role for inositol pyrophosphates in these controls. Inositol polyphosphates may be involved in the regulation of chromatin remodeling of transcription. Regulates nuclear mRNA export via inositol phosphate metabolism. Also has lipid kinase activity, transforming the lipid inositol phosphatidylinositol 4,5-bisphosphate (PI(4,5)P2) into phosphatidylinositol 3,4,5-trisphosphate (PI(3,4,5)P3) in the nucleus. Its kinase activity is necessary for the propagation of most [PSI+] prion variants. This Saccharomyces cerevisiae (strain ATCC 204508 / S288c) (Baker's yeast) protein is Inositol polyphosphate multikinase (ARG82).